Consider the following 249-residue polypeptide: Deoxyribose-phosphate aldolase (249 aa).

Residue aspartate 94 is the Proton donor/acceptor of the active site. The active-site Schiff-base intermediate with acetaldehyde is the lysine 158. Lysine 200 (proton donor/acceptor) is an active-site residue.

It belongs to the DeoC/FbaB aldolase family. DeoC type 1 subfamily.

The protein resides in the cytoplasm. It carries out the reaction 2-deoxy-D-ribose 5-phosphate = D-glyceraldehyde 3-phosphate + acetaldehyde. The protein operates within carbohydrate degradation; 2-deoxy-D-ribose 1-phosphate degradation; D-glyceraldehyde 3-phosphate and acetaldehyde from 2-deoxy-alpha-D-ribose 1-phosphate: step 2/2. Its function is as follows. Catalyzes a reversible aldol reaction between acetaldehyde and D-glyceraldehyde 3-phosphate to generate 2-deoxy-D-ribose 5-phosphate. This chain is Deoxyribose-phosphate aldolase, found in Thermoplasma volcanium (strain ATCC 51530 / DSM 4299 / JCM 9571 / NBRC 15438 / GSS1).